Consider the following 702-residue polypeptide: Epsin-1 (702 aa).

The ENTH domain maps to Asn10–Arg142. Composition is skewed to basic and acidic residues over residues His136–Phe160 and Ser183–His192. Residues His136 to Gln285 form a disordered region. Residues Arg193 to Arg214 show a composition bias toward basic residues. 4 positions are modified to phosphoserine: Ser212, Ser216, Ser218, and Ser223. UIM domains follow at residues Glu226–Asp245 and Asp254–Arg273. A compositionally biased stretch (basic and acidic residues) spans Glu230–Arg248. Residue Ser255 is modified to Phosphoserine. The span at Ser266 to Gln283 shows a compositional bias: basic and acidic residues. Thr406 is subject to Phosphothreonine. Disordered stretches follow at residues Asn504–Asp589 and Pro683–Leu702. Positions Thr514–Leu534 are enriched in polar residues. The span at Gln535 to Ser549 shows a compositional bias: low complexity. A compositionally biased stretch (polar residues) spans Lys557–Pro577. Positions Pro683–Gln695 are enriched in low complexity.

This sequence belongs to the epsin family.

It localises to the cytoplasm. It is found in the membrane. Its function is as follows. Binds to membranes enriched in phosphatidylinositol 3,5-bisphosphate (PtdIns(3,5)P2) and phosphatidylinositol 4,5-bisphosphate (PtdIns(4,5)P2). Required for endocytosis and localization of actin. This Schizosaccharomyces pombe (strain 972 / ATCC 24843) (Fission yeast) protein is Epsin-1 (ent1).